The following is a 249-amino-acid chain: 2,3-bisphosphoglycerate-dependent phosphoglycerate mutase (249 aa).

Residues 9–16, 22–23, R61, 88–91, K99, 115–116, and 184–185 each bind substrate; these read RHGQSQWN, TG, ERHY, RR, and GN. H10 acts as the Tele-phosphohistidine intermediate in catalysis. E88 functions as the Proton donor/acceptor in the catalytic mechanism.

Belongs to the phosphoglycerate mutase family. BPG-dependent PGAM subfamily. Homodimer.

It catalyses the reaction (2R)-2-phosphoglycerate = (2R)-3-phosphoglycerate. Its pathway is carbohydrate degradation; glycolysis; pyruvate from D-glyceraldehyde 3-phosphate: step 3/5. In terms of biological role, catalyzes the interconversion of 2-phosphoglycerate and 3-phosphoglycerate. The protein is 2,3-bisphosphoglycerate-dependent phosphoglycerate mutase of Xylella fastidiosa (strain M12).